Reading from the N-terminus, the 1392-residue chain is MSYSFTEKKRIRKSFAKRENVLEVPFLLATQIDSYAKFLQLENAFDKRTDDGLQAAFNSIFPIVSHNGYARLEFVHYTLGEPLFDIPECQLRGITYAAPLRARIRLVILDKEASKPTVKEVRENEVYMGEIPLMTPSGSFVINGTERVIVSQLHRSPGVFFEHDKGKTHSSGKLLFSARIIPYRGSWLDFEFDPKDLLYFRIDRRRKMPVTILLKALGYNNEQILDIFYDKETFYLSSNGVQTDLVAGRLKGETAKVDILDKEGNVLVAKGKRITAKNIRDITNAGLTRLDVEPESLLGKALAADLIDSETGEVLASANDEITEELLAKFDINGVKEITTLYINELDQGAYISNTLRTDETAGRQAARVAIYRMMRPGEPPTEEAVEQLFNRLFFSEDSYDLSRVGRMKFNTRTYEQKLSEAQQNSWYGRLLNETFAGAADKGGYVLSVEDIVASIATLVELRNGHGEVDDIDHLGNRRVRSVGELTENQFRSGLARVERAVKERLNQAESENLMPHDLINAKPVSAAIKEFFGSSQLSQFMDQTNPLSEVTHKRRVSALGPGGLTRERAGFEVRDVHPTHYGRVCPIETPEGPNIGLINSLSVYARTNDYGFLETPYRRVIDGKVTEEIDYLSAIEEGRYVIAQANADLDSDGNLIGDLVTCREKGETIMATPDRVQYMDVATGQVVSVAASLIPFLEHDDANRALMGANMQRQAVPCLRPEKPMVGTGIERSVAVDSATAIVARRGGVVEYVDANRVVVRVHDDEATAGEVGVDIYNLVKFTRSNQSTNINQRPAVKAGDVLQRGDLVADGASTDLGELALGQNMTIAFMPWNGYNYEDSILISEKVAADDRYTSIHIEELNVVARDTKLGAEDITRDIPNLSERMQNRLDESGIVYIGAEVEAGDVLVGKVTPKGETQLTPEEKLLRAIFGEKASDVKDTSLRMPTGMSGTVIDVQVFTREGIQRDKRAQSIIDSELKRYRLDLNDQLRIFDNDAFDRIERMIVGQKANGGPMKLAKGSEITTEYLAGLPSRHDWFDIRLTDEDLAKQLELIKVSLQQKREEADELYEIKKKKLTQGDELQPGVQKMVKVFIAIKRRLQAGDKMAGRHGNKGVVSRILPVEDMPYMADGRPVDIVLNPLGVPSRMNIGQILEVHLGWAAKGIGERIDRMLKEQRKAGELREFLNRLYNGSGKKEDLDALTDEEIIELASNLRKGASFASPVFDGAKESEIREMLNLAYPSDDPEVEKLGFNDSKTQITLYDGRSGEAFDRKVTVGVMHYLKLHHLVDEKMHARSTGPYSLVTQQPLGGKAQFGGQRFGEMEVWALEAYGAAYTLQEMLTVKSDDVNGRTKMYENIVKGEHKIDAGMPESFNVLVKEIRSLGLDIDLERY.

It belongs to the RNA polymerase beta chain family. The RNAP catalytic core consists of 2 alpha, 1 beta, 1 beta' and 1 omega subunit. When a sigma factor is associated with the core the holoenzyme is formed, which can initiate transcription.

The catalysed reaction is RNA(n) + a ribonucleoside 5'-triphosphate = RNA(n+1) + diphosphate. DNA-dependent RNA polymerase catalyzes the transcription of DNA into RNA using the four ribonucleoside triphosphates as substrates. The protein is DNA-directed RNA polymerase subunit beta of Neisseria meningitidis serogroup A / serotype 4A (strain DSM 15465 / Z2491).